The primary structure comprises 198 residues: Ribonuclease HII (198 aa).

The RNase H type-2 domain occupies 10–198 (QLVAGVDEVG…PVKRALGLAS (189 aa)). A divalent metal cation is bound by residues Asp-16, Glu-17, and Asp-108.

It belongs to the RNase HII family. Mn(2+) serves as cofactor. The cofactor is Mg(2+).

It localises to the cytoplasm. The enzyme catalyses Endonucleolytic cleavage to 5'-phosphomonoester.. Functionally, endonuclease that specifically degrades the RNA of RNA-DNA hybrids. This is Ribonuclease HII from Citrobacter koseri (strain ATCC BAA-895 / CDC 4225-83 / SGSC4696).